A 493-amino-acid polypeptide reads, in one-letter code: Cytochrome P450 2E1 (493 aa).

298 to 303 (FAGTET) provides a ligand contact to substrate. Position 437 (Cys437) interacts with heme.

Belongs to the cytochrome P450 family. In terms of assembly, interacts with chaperones HSP70 and HSP90; this interaction is required for initial targeting to mitochondria. The cofactor is heme.

Its subcellular location is the endoplasmic reticulum membrane. The protein localises to the microsome membrane. The protein resides in the mitochondrion inner membrane. The catalysed reaction is an organic molecule + reduced [NADPH--hemoprotein reductase] + O2 = an alcohol + oxidized [NADPH--hemoprotein reductase] + H2O + H(+). It carries out the reaction (5Z,8Z,11Z)-eicosatrienoate + reduced [NADPH--hemoprotein reductase] + O2 = 19-hydroxy-(5Z,8Z,11Z)-eicosatrienoate + oxidized [NADPH--hemoprotein reductase] + H2O + H(+). The enzyme catalyses (5Z,8Z,11Z,14Z,17Z)-eicosapentaenoate + reduced [NADPH--hemoprotein reductase] + O2 = 19-hydroxy-(5Z,8Z,11Z,14Z,17Z)-eicosapentaenoate + oxidized [NADPH--hemoprotein reductase] + H2O + H(+). It catalyses the reaction (4Z,7Z,10Z,13Z,16Z,19Z)-docosahexaenoate + reduced [NADPH--hemoprotein reductase] + O2 = 21-hydroxy-(4Z,7Z,10Z,13Z,16Z,19Z)-docosahexaenoate + oxidized [NADPH--hemoprotein reductase] + H2O + H(+). The catalysed reaction is dodecanoate + reduced [NADPH--hemoprotein reductase] + O2 = 11-hydroxydodecanoate + oxidized [NADPH--hemoprotein reductase] + H2O + H(+). It carries out the reaction tetradecanoate + reduced [NADPH--hemoprotein reductase] + O2 = 13-hydroxytetradecanoate + oxidized [NADPH--hemoprotein reductase] + H2O + H(+). The enzyme catalyses 4-nitrophenol + NADPH + O2 + H(+) = 4-nitrocatechol + NADP(+) + H2O. It functions in the pathway lipid metabolism; fatty acid metabolism. With respect to regulation, the omega-1 hydroxylase activity is stimulated by cytochrome b5. In terms of biological role, a cytochrome P450 monooxygenase involved in the metabolism of fatty acids. Mechanistically, uses molecular oxygen inserting one oxygen atom into a substrate, and reducing the second into a water molecule, with two electrons provided by NADPH via cytochrome P450 reductase (NADPH--hemoprotein reductase). Catalyzes the hydroxylation of carbon-hydrogen bonds. Hydroxylates fatty acids specifically at the omega-1 position displaying the highest catalytic activity for saturated fatty acids. May be involved in the oxidative metabolism of xenobiotics. The protein is Cytochrome P450 2E1 of Rattus norvegicus (Rat).